A 62-amino-acid polypeptide reads, in one-letter code: U10-hottentoxin-Hj2a (62 aa).

The first 22 residues, 1 to 22 (MQKLLIILILFCILKFNVDVEG), serve as a signal peptide directing secretion. Intrachain disulfides connect Cys-28–Cys-46, Cys-33–Cys-59, and Cys-37–Cys-61.

The protein belongs to the short scorpion toxin superfamily. Potassium channel inhibitor family. Alpha-KTx 23 subfamily. Expressed by the venom gland.

The protein localises to the secreted. Its function is as follows. May block potassium channels. The polypeptide is U10-hottentoxin-Hj2a (Hottentotta judaicus (Black scorpion)).